Here is a 481-residue protein sequence, read N- to C-terminus: Lincomycin resistance protein (481 aa).

14 helical membrane-spanning segments follow: residues 30–50, 67–87, 99–119, 127–147, 162–182, 185–205, 215–235, 245–265, 285–305, 318–338, 340–360, 374–394, 421–441, and 446–466; these read WVTLVFLAVLQLLIAVDVTVV, QLTWVVTGYTVVGGGLLMVGG, LLFGAFLFGASSLAAGLAPNL, FGQGAGEALSLPAAMSLIACS, VASVGLVLGFLLSGVITQLFS, WIFLINIPLVSLVLVAVLLLV, PVDLPGALLFTAAPLLLIFGV, LPLAVGSLLAAAVCAAAFVAV, LVANGATVLLSAALSTSFFLL, IEAGLSFLPLGLSLILACVLV, GLIERIGTTGAAVLGMALAGP, LLTSVFPGMILLLRMATGLVA, LGGASGIAVYVSIGFSPHLGG, and FTVAYSLAGIGLIAAVLAVLA.

Belongs to the major facilitator superfamily. TCR/Tet family.

It localises to the cell membrane. Functionally, proton-dependent transporter. May mediate the efflux of lincomycin. This is Lincomycin resistance protein (lmrA) from Streptomyces lincolnensis.